The following is a 73-amino-acid chain: Putative membrane protein insertion efficiency factor (73 aa).

It belongs to the UPF0161 family.

The protein localises to the cell inner membrane. Could be involved in insertion of integral membrane proteins into the membrane. In Treponema denticola (strain ATCC 35405 / DSM 14222 / CIP 103919 / JCM 8153 / KCTC 15104), this protein is Putative membrane protein insertion efficiency factor.